The sequence spans 60 residues: MATKTVKVTQTKSAIGRLPKHRATLTGLGLRRIGHTVELEDTPSVRGMINKVYYMVKVED.

It belongs to the universal ribosomal protein uL30 family. In terms of assembly, part of the 50S ribosomal subunit.

The sequence is that of Large ribosomal subunit protein uL30 from Shewanella sp. (strain ANA-3).